Reading from the N-terminus, the 276-residue chain is Streptothricin hydrolase (276 aa).

Cys-176 (nucleophile) is an active-site residue. Positions 250–276 (PEAPAAAAAPAAGTGLSPAGPPPAPAR) are disordered. The span at 252–267 (APAAAAAPAAGTGLSP) shows a compositional bias: low complexity.

The protein belongs to the isochorismatase family. Homodimer. Requires Does not require a metal cofactor. as cofactor.

It carries out the reaction streptothricin F + H2O = streptothricin F acid. Its function is as follows. Catalyzes the hydrolysis of the amide bond of streptolidine lactam, thereby conferring streptothricin (ST) resistance. Can hydrolyze streptothricin-F and streptothricin-D. However, this strain is believed to be a ST nonproducer, which raises the possibility that its true role may not be its involvement in self-resistance to STs. May catalyze the hydrolysis of naturally occurring cyclic amide compounds that are structurally related to STs. The protein is Streptothricin hydrolase (sttH) of Streptomyces noursei (Streptomyces albulus).